We begin with the raw amino-acid sequence, 639 residues long: Zinc finger protein ZIC 5 (639 aa).

4 disordered regions span residues 113–171, 189–251, 323–355, and 379–409; these read PCGG…GHSR, HGAP…GHPH, PGPHLQHHAPPPAPPPPPAPAQHPHQHHPHLPG, and PDELAGLPPPPPPPPPPPPPPPAGGAKPCSK. Residues 124–150 show a composition bias toward pro residues; it reads SAPPPPAPPLPPTPSPPPPPPPPPPPA. Pro residues-rich tracts occupy residues 331 to 343 and 385 to 401; these read APPPAPPPPPAPA and LPPPPPPPPPPPPPPPA. The C2H2-type 1; atypical zinc-finger motif lies at 434-461; that stretch reads HVCFWEDCPREGKPFKAKYKLINHIRVH. 3 consecutive C2H2-type zinc fingers follow at residues 467–491, 497–521, and 527–551; these read FPCPFPGCGKVFARSENLKIHKRTH, FKCEFDGCDRKFANSSDRKKHSHVH, and YYCKIRGCDKSYTHPSSLRKHMKIH. The tract at residues 548-568 is disordered; sequence MKIHCKSPPPSPGPLGYSSVG. Phosphoserine is present on residues S554, S558, and S576. Residues 607–639 form a disordered region; sequence APSHLHTPSSNGTTSETEDEEIYGNPEVVRTIH. Polar residues predominate over residues 612-621; that stretch reads HTPSSNGTTS.

Belongs to the GLI C2H2-type zinc-finger protein family.

It localises to the nucleus. In terms of biological role, essential for neural crest development, converting cells from an epidermal fate to a neural crest cell fate. Binds to DNA. This is Zinc finger protein ZIC 5 (ZIC5) from Homo sapiens (Human).